Reading from the N-terminus, the 156-residue chain is Ribosomal RNA large subunit methyltransferase H (156 aa).

S-adenosyl-L-methionine contacts are provided by residues L73, G104, and 123 to 128 (LSPLTL).

The protein belongs to the RNA methyltransferase RlmH family. In terms of assembly, homodimer.

Its subcellular location is the cytoplasm. The catalysed reaction is pseudouridine(1915) in 23S rRNA + S-adenosyl-L-methionine = N(3)-methylpseudouridine(1915) in 23S rRNA + S-adenosyl-L-homocysteine + H(+). Functionally, specifically methylates the pseudouridine at position 1915 (m3Psi1915) in 23S rRNA. The chain is Ribosomal RNA large subunit methyltransferase H from Photobacterium profundum (strain SS9).